The chain runs to 314 residues: Olfactory receptor 10T2 (314 aa).

Over 1-26 (MRGFNKTTVVTQFILVGFSSLGELQL) the chain is Extracellular. Asn5 carries an N-linked (GlcNAc...) asparagine glycan. Residues 27-47 (LLFVIFLLLYLTILVANVTIM) form a helical membrane-spanning segment. At 48-55 (AVIRFSWT) the chain is on the cytoplasmic side. Residues 56 to 76 (LHTPMYGFLFILSFSESCYTF) traverse the membrane as a helical segment. Residues 77-100 (VIIPQLLVHLLSDTKTISFMACAT) lie on the Extracellular side of the membrane. Residues Cys98 and Cys190 are joined by a disulfide bond. Residues 101–121 (QLFFFLGFACTNCLLIAVMGY) form a helical membrane-spanning segment. The Cytoplasmic segment spans residues 122 to 140 (DRYVAICHPLRYTLIINKR). Residues 141–161 (LGLELISLSGATGFFIALVAT) traverse the membrane as a helical segment. Residues 162–198 (NLICDMRFCGPNRVNHYFCDMAPVIKLACTDTHVKEL) lie on the Extracellular side of the membrane. The chain crosses the membrane as a helical span at residues 199–218 (ALFSLSILVIMVPFLLILIS). Over 219 to 237 (YGFIVNTILKIPSAEGKKA) the chain is Cytoplasmic. The helical transmembrane segment at 238 to 258 (FVTCASHLTVVFVHYGCASII) threads the bilayer. The Extracellular segment spans residues 259–271 (YLRPKSKSASDKD). The chain crosses the membrane as a helical span at residues 272-292 (QLVAVTYTVVTPLLNPLVYSL). Topologically, residues 293–314 (RNKEVKTALKRVLGMPVATKMS) are cytoplasmic.

This sequence belongs to the G-protein coupled receptor 1 family.

The protein localises to the cell membrane. Its function is as follows. Odorant receptor. The chain is Olfactory receptor 10T2 (OR10T2) from Homo sapiens (Human).